Reading from the N-terminus, the 1014-residue chain is Endogenous retrovirus group K member 10 Pol protein (1014 aa).

A Reverse transcriptase domain is found at 57–245 (LEKGHIEPSF…TPFHYLGMQI (189 aa)). The LPQG motif lies at 161 to 164 (LPQG). The YXDD motif lies at 195-198 (YIDD). An RNase H type-1 domain is found at 460–590 (LENALTVFTD…ADLLVSSALI (131 aa)). Residues Asp-469, Glu-497, Asp-517, and Asp-582 each contribute to the Mg(2+) site. The segment at 587-628 (SALIKAQELHALTHVNAAGLKNKFDVTWKQAKDIVQHCTQCQ) adopts an Integrase-type zinc-finger fold. His-596, His-600, Cys-624, and Cys-627 together coordinate Zn(2+). Residues 642 to 803 (RGLCPNALWQ…TSAEQHLTGK (162 aa)) enclose the Integrase catalytic domain. Positions 811 to 859 (KLIWWKDNKNKTWEIGKVITWGRGFACVSPGENQLPVWLPTRHLKFYNE) form a DNA-binding region, integrase-type.

The protein belongs to the beta type-B retroviral polymerase family. HERV class-II K(HML-2) pol subfamily.

The enzyme catalyses DNA(n) + a 2'-deoxyribonucleoside 5'-triphosphate = DNA(n+1) + diphosphate. The catalysed reaction is Endonucleolytic cleavage to 5'-phosphomonoester.. Functionally, early post-infection, the reverse transcriptase converts the viral RNA genome into double-stranded viral DNA. The RNase H domain of the reverse transcriptase performs two functions. It degrades the RNA template and specifically removes the RNA primer from the RNA/DNA hybrid. Following nuclear import, the integrase catalyzes the insertion of the linear, double-stranded viral DNA into the host cell chromosome. Endogenous Pol proteins may have kept, lost or modified their original function during evolution. This is Endogenous retrovirus group K member 10 Pol protein (ERVK-10) from Homo sapiens (Human).